Reading from the N-terminus, the 400-residue chain is MNGQLDLSGKLIIKAQLGEDIRRIPIHNEDITYDELVLMMQRVFRGKLLSNDEVTIKYKDEDGDLITIFDSSDLSFAIQCSRILKLTLFVNGQPRPLESSQVKYLRRELIELRNKVNRLLDSLEPPGEPGPSTNIPENDTVDGREEKSASDSSGKQSTQVMAASMSAFDPLKNQDEINKNVMSAFGLTDDQVSGPPSAPAEDRSGTPDSIASSSSAAHPPGVQPQQPPYTGAQTQAGQIEGQMYQQYQQQAGYGAQQPQAPPQQPQQYGIQYSASYSQQTGPQQPQQFQGYGQQPTSQAPAPAFSGQPQQLPAQPPQQYQASNYPAQTYTAQTSQPTNYTVAPASQPGMAPSQPGAYQPRPGFTSLPGSTMTPPPSGPNPYARNRPPFGQGYTQPGPGYR.

Met1 carries the N-acetylmethionine modification. The region spanning 10–91 is the PB1 domain; that stretch reads KLIIKAQLGE…RILKLTLFVN (82 aa). The residue at position 50 (Ser50) is a Phosphoserine. Residues 97-124 are a coiled coil; the sequence is LESSQVKYLRRELIELRNKVNRLLDSLE. Disordered stretches follow at residues 120-160 and 187-400; these read LDSL…STQV and LTDD…PGYR. The segment covering 150 to 160 has biased composition (polar residues); that stretch reads SDSSGKQSTQV. Position 197 is a phosphoserine (Ser197). Low complexity-rich tracts occupy residues 237 to 258, 265 to 298, and 307 to 327; these read GQIE…AQQP, PQQY…PTSQ, and QPQQ…YPAQ. The span at 328–340 shows a compositional bias: polar residues; it reads TYTAQTSQPTNYT. 2 positions are modified to omega-N-methylarginine: Arg385 and Arg400.

As to quaternary structure, self-associates to form an oligomeric complex. Interacts with PDCD6; promoting localization and polymerization of TFG at endoplasmic reticulum exit site. Interacts with SEC16B. Ubiquitous.

It is found in the endoplasmic reticulum. Its function is as follows. Plays a role in the normal dynamic function of the endoplasmic reticulum (ER) and its associated microtubules. Required for secretory cargo traffic from the endoplasmic reticulum to the Golgi apparatus. This is Protein TFG (TFG) from Homo sapiens (Human).